The following is a 327-amino-acid chain: MKPLSLKGHDRALTRVRINRDGDLLFSAGKDKSPCVWYMENGERIGTYDGHNGVIWDIDVSWDTRHFCSASGDVFVKLWNCETGDVINSVSTPTAARSISLSYSGNLIAFTTIKMTQNVASLFVYDIRDGSQMSGENQPTFRKSLQTQANSCVWTHLDDTVCVGNEKGNVHQYDIRKGDDIVNFNDEAHKFQINDMQMSTDESFLITASKDKTARLFDARTLDCLKTYKAERPVNSAAISPIRDHVILGGGEEAMKVTQTTAASGHFEAKLYHLVFEEEFARFKGHFGPINTLAFHPGGNCVVSGGEDGYVRIQEFDTDYLKFDYDF.

WD repeat units lie at residues 8–49 (GHDR…GTYD), 51–91 (HNGV…NSVS), 144–183 (SLQT…DIVN), 188–227 (AHKF…CLKT), 229–268 (KAER…GHFE), and 285–324 (GHFG…LKFD).

The protein belongs to the eIF-3 subunit I family. In terms of assembly, component of the eukaryotic translation initiation factor 3 (eIF-3) complex.

It localises to the cytoplasm. Functionally, component of the eukaryotic translation initiation factor 3 (eIF-3) complex, which is involved in protein synthesis of a specialized repertoire of mRNAs and, together with other initiation factors, stimulates binding of mRNA and methionyl-tRNAi to the 40S ribosome. The eIF-3 complex specifically targets and initiates translation of a subset of mRNAs involved in cell proliferation. This is Eukaryotic translation initiation factor 3 subunit I from Brugia malayi (Filarial nematode worm).